Consider the following 104-residue polypeptide: Protein SMALL AUXIN UP-REGULATED RNA 12 (104 aa).

The protein belongs to the ARG7 family. Expressed in flowers and etiolated hypocotyls.

The protein localises to the cell membrane. Provide a mechanistic link between auxin and plasma membrane H(+)-ATPases (PM H(+)-ATPases, e.g. AHA1 and AHA2), and triggers PM H(+)-ATPases activity by promoting phosphorylation of their C-terminal autoinhibitory domain as a result of PP2C-D subfamily of type 2C phosphatases inhibition, thus leading to the acidification of the apoplast and the facilitation of solutes and water uptake to drive cell expansion. Triggers plant growth probably by promoting cell elongation. Regulates branch angles and bending. The chain is Protein SMALL AUXIN UP-REGULATED RNA 12 from Arabidopsis thaliana (Mouse-ear cress).